Here is a 412-residue protein sequence, read N- to C-terminus: MKIYLVGGAVRDALLGLPVKDRDWVVVGSTPQEMLDAGYQQVGRDFPVFLHPQTHEEYALARTERKSGSGYTGFTCYAAPDVTLEDDLKRRDLTINALAQDDNGEIIDPYNGLGDLQNRLLRHVSPAFGEDPLRVLRVARFAARYAHLGFRIADETLALMREMTHAGELEHLTPERVWKETESALTTRNPQVFFQVLRDCGALRVLFPEIDALFGVPAPARWHPEIDTGIHTLMTLSMAAMLSPQVDVRFATLCHDLGKGLTPPELWPRHHGHGPAGVKLVEQLCQRLRVPNEIRDLARLVAEFHDLIHTFPMLNPKTIVKLFDSIDAWRKPQRVEQLALTSEADVRGRTGFESADYPQGRWLREAWEVAQSVPTKAVVEAGFKGVEIREELTRRRIAAVASWKEQRCPKPD.

ATP is bound by residues glycine 8 and arginine 11. Residues glycine 8 and arginine 11 each contribute to the CTP site. The Mg(2+) site is built by aspartate 21 and aspartate 23. Positions 91, 137, and 140 each coordinate ATP. CTP contacts are provided by arginine 91, arginine 137, and arginine 140. An HD domain is found at 228 to 329 (TGIHTLMTLS…VKLFDSIDAW (102 aa)).

The protein belongs to the tRNA nucleotidyltransferase/poly(A) polymerase family. Bacterial CCA-adding enzyme type 1 subfamily. Monomer. Can also form homodimers and oligomers. Requires Mg(2+) as cofactor. It depends on Ni(2+) as a cofactor.

The enzyme catalyses a tRNA precursor + 2 CTP + ATP = a tRNA with a 3' CCA end + 3 diphosphate. It catalyses the reaction a tRNA with a 3' CCA end + 2 CTP + ATP = a tRNA with a 3' CCACCA end + 3 diphosphate. Functionally, catalyzes the addition and repair of the essential 3'-terminal CCA sequence in tRNAs without using a nucleic acid template. Adds these three nucleotides in the order of C, C, and A to the tRNA nucleotide-73, using CTP and ATP as substrates and producing inorganic pyrophosphate. tRNA 3'-terminal CCA addition is required both for tRNA processing and repair. Also involved in tRNA surveillance by mediating tandem CCA addition to generate a CCACCA at the 3' terminus of unstable tRNAs. While stable tRNAs receive only 3'-terminal CCA, unstable tRNAs are marked with CCACCA and rapidly degraded. In Escherichia coli (strain SMS-3-5 / SECEC), this protein is Multifunctional CCA protein.